We begin with the raw amino-acid sequence, 218 residues long: ATP phosphoribosyltransferase (218 aa).

It belongs to the ATP phosphoribosyltransferase family. Short subfamily. As to quaternary structure, heteromultimer composed of HisG and HisZ subunits.

The protein resides in the cytoplasm. The catalysed reaction is 1-(5-phospho-beta-D-ribosyl)-ATP + diphosphate = 5-phospho-alpha-D-ribose 1-diphosphate + ATP. The protein operates within amino-acid biosynthesis; L-histidine biosynthesis; L-histidine from 5-phospho-alpha-D-ribose 1-diphosphate: step 1/9. In terms of biological role, catalyzes the condensation of ATP and 5-phosphoribose 1-diphosphate to form N'-(5'-phosphoribosyl)-ATP (PR-ATP). Has a crucial role in the pathway because the rate of histidine biosynthesis seems to be controlled primarily by regulation of HisG enzymatic activity. This Synechococcus elongatus (strain ATCC 33912 / PCC 7942 / FACHB-805) (Anacystis nidulans R2) protein is ATP phosphoribosyltransferase.